The chain runs to 256 residues: MDPLSISMESKVVLLGSSDVGKTALSLRYVDGIFPKRLTSTIGASFLTRTINIEGNKIKYLIWDSAGQDRFRSLATLYYRGACVAILVFDITQQKTFDIVKGWVEELKANIQEEIIMVLCGNKIDLEQNRQVKSETAKLYADEINAMYVETSAKENEGVEGMFLEIGKKLILNKHNEYFKQFQQQQKLHKQFQQQNQSLYQYHIQQQKHQQQQQQQQQQIFKNQQFYNNGHLQGSINGHNNQNSTNYSDNSDQCCG.

16-23 (GSSDVGKT) is a GTP binding site. The Effector region signature appears at 38–46 (LTSTIGASF). GTP is bound by residues 64-68 (DSAGQ) and 122-125 (NKID). The tract at residues 229 to 256 (NGHLQGSINGHNNQNSTNYSDNSDQCCG) is disordered. Polar residues predominate over residues 230-256 (GHLQGSINGHNNQNSTNYSDNSDQCCG). 2 S-geranylgeranyl cysteine lipidation sites follow: Cys254 and Cys255.

Belongs to the small GTPase superfamily. Rab family.

It is found in the cell membrane. This is Ras-related protein RabJ (rabJ) from Dictyostelium discoideum (Social amoeba).